We begin with the raw amino-acid sequence, 238 residues long: tRNA (guanine-N(7)-)-methyltransferase (238 aa).

S-adenosyl-L-methionine is bound by residues glutamate 70, aspartate 95, aspartate 122, and aspartate 145. Aspartate 145 is an active-site residue. Residues lysine 149, aspartate 181, and 216 to 219 (TKFE) contribute to the substrate site.

Belongs to the class I-like SAM-binding methyltransferase superfamily. TrmB family.

It catalyses the reaction guanosine(46) in tRNA + S-adenosyl-L-methionine = N(7)-methylguanosine(46) in tRNA + S-adenosyl-L-homocysteine. It functions in the pathway tRNA modification; N(7)-methylguanine-tRNA biosynthesis. Functionally, catalyzes the formation of N(7)-methylguanine at position 46 (m7G46) in tRNA. In Neisseria meningitidis serogroup C / serotype 2a (strain ATCC 700532 / DSM 15464 / FAM18), this protein is tRNA (guanine-N(7)-)-methyltransferase.